A 249-amino-acid polypeptide reads, in one-letter code: Probable transcriptional regulatory protein ERGA_CDS_03720 (249 aa).

The interval 1–21 (MAGHSQFANIKHRKGAQDAKR) is disordered.

This sequence belongs to the TACO1 family.

It localises to the cytoplasm. This is Probable transcriptional regulatory protein ERGA_CDS_03720 from Ehrlichia ruminantium (strain Gardel).